Here is a 365-residue protein sequence, read N- to C-terminus: F-box protein At1g48060 (365 aa).

The segment at 1-20 (MKPQEEEEKNENMARKRSKS) is disordered. The F-box domain occupies 20–69 (SSSSLSIPLDIATDIFLRLPAKSVVRFSCVAKHWSSITTAPYFTNSFETR).

This Arabidopsis thaliana (Mouse-ear cress) protein is F-box protein At1g48060.